The sequence spans 186 residues: Imidazoleglycerol-phosphate dehydratase (186 aa).

This sequence belongs to the imidazoleglycerol-phosphate dehydratase family.

The protein resides in the cytoplasm. The catalysed reaction is D-erythro-1-(imidazol-4-yl)glycerol 3-phosphate = 3-(imidazol-4-yl)-2-oxopropyl phosphate + H2O. Its pathway is amino-acid biosynthesis; L-histidine biosynthesis; L-histidine from 5-phospho-alpha-D-ribose 1-diphosphate: step 6/9. In Pyrobaculum aerophilum (strain ATCC 51768 / DSM 7523 / JCM 9630 / CIP 104966 / NBRC 100827 / IM2), this protein is Imidazoleglycerol-phosphate dehydratase.